Consider the following 901-residue polypeptide: Probable inorganic carbon transporter subunit DabA (901 aa).

Positions 424, 426, 606, and 621 each coordinate Zn(2+).

The protein belongs to the inorganic carbon transporter (TC 9.A.2) DabA family. In terms of assembly, forms a complex with DabB. Zn(2+) serves as cofactor.

The protein resides in the cell membrane. Part of an energy-coupled inorganic carbon pump. In Staphylococcus aureus (strain MSSA476), this protein is Probable inorganic carbon transporter subunit DabA.